Consider the following 644-residue polypeptide: Keratin, type II cytoskeletal 1 (644 aa).

Residues 2–179 (SRQFSSRSGY…DPEIQKVKSR (178 aa)) form a head region. Arg-12 carries the omega-N-methylarginine modification. Phosphoserine is present on residues Ser-18 and Ser-21. Residues 22–38 (AGIINYQRRTTSSSTRR) are compositionally biased toward low complexity. Residues 22 to 47 (AGIINYQRRTTSSSTRRSGGGGGRFS) form a disordered region. The residue at position 45 (Arg-45) is an Omega-N-methylarginine. Ser-66 is subject to Phosphoserine. Position 82 is an omega-N-methylarginine (Arg-82). The segment at 180 to 215 (EREQIKSLNNQFASFIDKVRFLEQQNQVLQTKWELL) is coil 1A. An IF rod domain is found at 180 to 493 (EREQIKSLNN…TLLEGEESRM (314 aa)). Residues 216–234 (QQVDTSTRTHNLEPYFESF) form a linker 1 region. Residues 235–326 (INNLRRRVDQ…ALYQAELSQM (92 aa)) form a coil 1B region. Lys-276 is modified (N6,N6-dimethyllysine). Positions 327–350 (QTQISETNVILSMDNNRSLDLDSI) are linker 12. Residue Ser-344 is modified to Phosphoserine. Residues 351-489 (IAEVKAQYED…ATYRTLLEGE (139 aa)) are coil 2. 2 disordered regions span residues 489–523 (EESR…GGGG) and 568–644 (SGGG…GVTR). The interval 490–644 (ESRMSGECAP…VSTTYSGVTR (155 aa)) is tail. Low complexity predominate over residues 501–511 (VSVSVSTSHTT). Composition is skewed to gly residues over residues 513 to 523 (SGGGSRGGGGG) and 568 to 620 (SGGG…GSSS). Residues Arg-518 and Arg-588 each carry the omega-N-methylarginine modification. Positions 621 to 631 (GGVKSSGGSSS) are enriched in low complexity. Over residues 632 to 644 (VKFVSTTYSGVTR) the composition is skewed to polar residues.

The protein belongs to the intermediate filament family. In terms of assembly, heterotetramer of two type I and two type II keratins. Heterodimer with KRT10. Two heterodimers of KRT1 and KRT10 form a heterotetramer. Forms a heterodimer with KRT14; the interaction is more abundant in the absence of KRT5. Interacts with PLEC isoform 1C, when in a heterodimer with KRT10. Interacts with ITGB1 in the presence of RACK1 and SRC, and with RACK1. Interacts with C1QBP; the association represents a cell surface kininogen receptor. Interacts with EPPK1; interaction is dependent of higher-order structure of intermediate filament. Post-translationally, undergoes deimination of some arginine residues (citrullination). As to expression, the source of this protein is neonatal foreskin. The 67-kDa type II keratins are expressed in terminally differentiating epidermis.

It localises to the cell membrane. Its subcellular location is the cytoplasm. In terms of biological role, may regulate the activity of kinases such as PKC and SRC via binding to integrin beta-1 (ITB1) and the receptor of activated protein C kinase 1 (RACK1). In complex with C1QBP is a high affinity receptor for kininogen-1/HMWK. This is Keratin, type II cytoskeletal 1 (KRT1) from Homo sapiens (Human).